A 277-amino-acid polypeptide reads, in one-letter code: Urease accessory protein UreD (277 aa).

It belongs to the UreD family. UreD, UreF and UreG form a complex that acts as a GTP-hydrolysis-dependent molecular chaperone, activating the urease apoprotein by helping to assemble the nickel containing metallocenter of UreC. The UreE protein probably delivers the nickel.

It is found in the cytoplasm. In terms of biological role, required for maturation of urease via the functional incorporation of the urease nickel metallocenter. This is Urease accessory protein UreD from Sinorhizobium medicae (strain WSM419) (Ensifer medicae).